The following is a 300-amino-acid chain: Glycine--tRNA ligase alpha subunit (300 aa).

This sequence belongs to the class-II aminoacyl-tRNA synthetase family. As to quaternary structure, tetramer of two alpha and two beta subunits.

Its subcellular location is the cytoplasm. It catalyses the reaction tRNA(Gly) + glycine + ATP = glycyl-tRNA(Gly) + AMP + diphosphate. The protein is Glycine--tRNA ligase alpha subunit of Prochlorococcus marinus (strain MIT 9313).